A 90-amino-acid polypeptide reads, in one-letter code: Bombyxin B-9 (90 aa).

Residues 1–20 (MMKTAVMFILVVVISLTYSS) form the signal peptide. 3 disulfide bridges follow: C30/C75, C42/C88, and C74/C79. Positions 49 to 64 (GGAQYAPYWQETYLRS) are cleaved as a propeptide — c peptide like.

The protein belongs to the insulin family. Heterodimer of a B chain and an A chain linked by two disulfide bonds.

Its subcellular location is the secreted. In terms of biological role, brain peptide responsible for activation of prothoracic glands to produce ecdysone in insects. This chain is Bombyxin B-9 (BBXB9), found in Bombyx mori (Silk moth).